The following is a 312-amino-acid chain: NADH-ubiquinone oxidoreductase chain 1 (312 aa).

8 consecutive transmembrane segments (helical) span residues F3 to F23, I77 to V97, L104 to G124, L150 to F170, I174 to L194, L226 to F246, D250 to A270, and C289 to F309.

It belongs to the complex I subunit 1 family.

The protein resides in the mitochondrion inner membrane. It carries out the reaction a ubiquinone + NADH + 5 H(+)(in) = a ubiquinol + NAD(+) + 4 H(+)(out). In terms of biological role, core subunit of the mitochondrial membrane respiratory chain NADH dehydrogenase (Complex I) that is believed to belong to the minimal assembly required for catalysis. Complex I functions in the transfer of electrons from NADH to the respiratory chain. The immediate electron acceptor for the enzyme is believed to be ubiquinone. In Drosophila subobscura (Fruit fly), this protein is NADH-ubiquinone oxidoreductase chain 1 (mt:ND1).